The primary structure comprises 228 residues: Prolactin (228 aa).

A signal peptide spans Met-1 to Ser-29. Cys-33 and Cys-40 are disulfide-bonded. A phosphoserine mark is found at Ser-55, Ser-63, and Ser-119. 2 disulfides stabilise this stretch: Cys-87–Cys-203 and Cys-220–Cys-228.

The protein belongs to the somatotropin/prolactin family. Interacts with PRLR.

It localises to the secreted. In terms of biological role, prolactin acts primarily on the mammary gland by promoting lactation, mammogenesis, mitogenesis and osmoregulation. In Trichosurus vulpecula (Brush-tailed possum), this protein is Prolactin (PRL).